A 136-amino-acid polypeptide reads, in one-letter code: uncharacterized protein (136 aa).

Its subcellular location is the mitochondrion. This is an uncharacterized protein from Arabidopsis thaliana (Mouse-ear cress).